The sequence spans 177 residues: Copper-binding regulatory protein cuf2 (177 aa).

Positions 1–40 form a DNA-binding region, copper-fist; sequence MIIIDGKNYACVVCLRGHRGSSCQHQERALIEVRTRGRPL. Cysteine 11, cysteine 14, cysteine 23, and histidine 25 together coordinate Zn(2+).

The protein resides in the nucleus. This is Copper-binding regulatory protein cuf2 (cuf2) from Schizosaccharomyces pombe (strain 972 / ATCC 24843) (Fission yeast).